The primary structure comprises 209 residues: Uracil phosphoribosyltransferase (209 aa).

5-phospho-alpha-D-ribose 1-diphosphate contacts are provided by residues Arg79, Arg104, and 131 to 139 (DPMLATGGS). Uracil-binding positions include Ile194 and 199–201 (GDA). A 5-phospho-alpha-D-ribose 1-diphosphate-binding site is contributed by Asp200.

It belongs to the UPRTase family. The cofactor is Mg(2+).

The enzyme catalyses UMP + diphosphate = 5-phospho-alpha-D-ribose 1-diphosphate + uracil. Its pathway is pyrimidine metabolism; UMP biosynthesis via salvage pathway; UMP from uracil: step 1/1. Its activity is regulated as follows. Allosterically activated by GTP. Functionally, catalyzes the conversion of uracil and 5-phospho-alpha-D-ribose 1-diphosphate (PRPP) to UMP and diphosphate. This Bacillus velezensis (strain DSM 23117 / BGSC 10A6 / LMG 26770 / FZB42) (Bacillus amyloliquefaciens subsp. plantarum) protein is Uracil phosphoribosyltransferase.